A 446-amino-acid polypeptide reads, in one-letter code: Phosphoglucosamine mutase (446 aa).

Residue serine 103 is the Phosphoserine intermediate of the active site. Residues serine 103, aspartate 242, aspartate 244, and aspartate 246 each contribute to the Mg(2+) site. Serine 103 is subject to Phosphoserine.

It belongs to the phosphohexose mutase family. Mg(2+) is required as a cofactor. In terms of processing, activated by phosphorylation.

The enzyme catalyses alpha-D-glucosamine 1-phosphate = D-glucosamine 6-phosphate. Catalyzes the conversion of glucosamine-6-phosphate to glucosamine-1-phosphate. This Vibrio campbellii (strain ATCC BAA-1116) protein is Phosphoglucosamine mutase.